The sequence spans 378 residues: Mannitol-1-phosphate 5-dehydrogenase (378 aa).

An NAD(+)-binding site is contributed by 4–15; the sequence is SVHFGAGNIGRG.

The protein belongs to the mannitol dehydrogenase family.

The catalysed reaction is D-mannitol 1-phosphate + NAD(+) = beta-D-fructose 6-phosphate + NADH + H(+). The protein is Mannitol-1-phosphate 5-dehydrogenase of Streptococcus pneumoniae (strain Hungary19A-6).